The primary structure comprises 189 residues: Large ribosomal subunit protein uL5 (189 aa).

The protein belongs to the universal ribosomal protein uL5 family. As to quaternary structure, part of the 50S ribosomal subunit; part of the 5S rRNA/L5/L18/L25 subcomplex. Contacts the 5S rRNA and the P site tRNA. Forms a bridge to the 30S subunit in the 70S ribosome.

In terms of biological role, this is one of the proteins that bind and probably mediate the attachment of the 5S RNA into the large ribosomal subunit, where it forms part of the central protuberance. In the 70S ribosome it contacts protein S13 of the 30S subunit (bridge B1b), connecting the 2 subunits; this bridge is implicated in subunit movement. Contacts the P site tRNA; the 5S rRNA and some of its associated proteins might help stabilize positioning of ribosome-bound tRNAs. The chain is Large ribosomal subunit protein uL5 from Corynebacterium jeikeium (strain K411).